Reading from the N-terminus, the 228-residue chain is uncharacterized protein (228 aa).

The next 5 helical transmembrane spans lie at 14–34, 42–62, 130–150, 156–176, and 192–212; these read HTIS…MLLA, VALF…AITL, FMFS…LVGS, FSFD…VLFM, and IAIA…LIAL.

This sequence belongs to the AzlC family.

It localises to the cell membrane. This is an uncharacterized protein from Helicobacter pylori (strain J99 / ATCC 700824) (Campylobacter pylori J99).